The chain runs to 680 residues: Dipeptidyl carboxypeptidase (680 aa).

Zn(2+) is bound at residue H469. The active site involves E470. Residues H473 and H476 each contribute to the Zn(2+) site.

It belongs to the peptidase M3 family. Zn(2+) serves as cofactor.

It localises to the cytoplasm. It catalyses the reaction Hydrolysis of unblocked, C-terminal dipeptides from oligopeptides, with broad specificity. Does not hydrolyze bonds in which P1' is Pro, or both P1 and P1' are Gly.. Functionally, removes dipeptides from the C-termini of N-blocked tripeptides, tetrapeptides and larger peptides. This is Dipeptidyl carboxypeptidase (dcp) from Salmonella typhimurium (strain LT2 / SGSC1412 / ATCC 700720).